An 805-amino-acid polypeptide reads, in one-letter code: Sucrose synthase (805 aa).

Positions 275–752 are GT-B glycosyltransferase; sequence MVFNVVILSP…GLKRIEEKYT (478 aa).

Belongs to the glycosyltransferase 1 family. Plant sucrose synthase subfamily. As to expression, expression is at least 10-fold higher in tubers compared to photosynthetically active tissues.

It carries out the reaction an NDP-alpha-D-glucose + D-fructose = a ribonucleoside 5'-diphosphate + sucrose + H(+). In terms of biological role, sucrose-cleaving enzyme that provides UDP-glucose and fructose for various metabolic pathways. This is Sucrose synthase from Solanum tuberosum (Potato).